A 449-amino-acid chain; its full sequence is Cyclin-B1-1 (449 aa).

Disordered regions lie at residues 1 to 34 and 90 to 143; these read MATR…VAGR and AVAP…SVRK. 2 stretches are compositionally biased toward low complexity: residues 90–102 and 121–134; these read AVAP…PAQR and EISS…RQQS.

This sequence belongs to the cyclin family. Cyclin AB subfamily.

This chain is Cyclin-B1-1 (CYCB1-1), found in Oryza sativa subsp. japonica (Rice).